The primary structure comprises 423 residues: Gamma-glutamyl phosphate reductase (423 aa).

The protein belongs to the gamma-glutamyl phosphate reductase family.

The protein localises to the cytoplasm. It carries out the reaction L-glutamate 5-semialdehyde + phosphate + NADP(+) = L-glutamyl 5-phosphate + NADPH + H(+). It participates in amino-acid biosynthesis; L-proline biosynthesis; L-glutamate 5-semialdehyde from L-glutamate: step 2/2. Catalyzes the NADPH-dependent reduction of L-glutamate 5-phosphate into L-glutamate 5-semialdehyde and phosphate. The product spontaneously undergoes cyclization to form 1-pyrroline-5-carboxylate. The polypeptide is Gamma-glutamyl phosphate reductase (Burkholderia thailandensis (strain ATCC 700388 / DSM 13276 / CCUG 48851 / CIP 106301 / E264)).